An 878-amino-acid chain; its full sequence is Protein daughter of sevenless (878 aa).

In terms of domain architecture, PH spans 3-113; it reads RTFYEGWLIK…WVNCICQVCH (111 aa). Residues 132 to 176 are disordered; it reads ENRTQHTSSSGGLSNSTQNTTTTSLHSSAGTTAPQASVPNAGGSA. Residues 136 to 159 show a composition bias toward low complexity; the sequence is QHTSSSGGLSNSTQNTTTTSLHSS. Over residues 160-169 the composition is skewed to polar residues; it reads AGTTAPQASV. Residues 246-275 are a coiled coil; that stretch reads ALIQAQAAAAAAEQLQQQQQQAARLAVSAN. The interval 391 to 437 is disordered; the sequence is NNNASKQRSDSDSESVFTDDDEWAHPLPLRENVDRSTRPSDSSIENE. Position 399 is a phosphoserine (serine 399). A Phosphothreonine modification is found at threonine 481. Interaction with DRK stretches follow at residues 638–650 and 690–702; these read DCPP…KPKV and GPPS…KPNA. Disordered stretches follow at residues 686–721 and 749–773; these read QQPI…SSGA and LPRQ…RTAS. Polar residues-rich tracts occupy residues 707 to 718 and 760 to 770; these read NSATMSPATRRS and SPGSMSVQHQR. Threonine 771 is subject to Phosphothreonine. 2 positions are modified to phosphotyrosine: tyrosine 801 and tyrosine 854.

As to quaternary structure, interacts with DRK. Post-translationally, phosphorylated on Tyr-801 and Tyr-854 in response to sevenless activation, which initiates the recruitment of the phosphatase CSW.

The protein resides in the cytoplasm. Its subcellular location is the membrane. Essential component for signaling from various receptor tyrosine kinases such as Sevenless, TORSO and DER. Required for photoreceptor cell and wing development. This is Protein daughter of sevenless (dos) from Drosophila melanogaster (Fruit fly).